We begin with the raw amino-acid sequence, 918 residues long: Hexokinase-1 (918 aa).

Residue Met1 is modified to N-acetylmethionine. The tract at residues 1 to 10 (MIAAQLLAYY) is mitochondrial-binding peptide (MBP). Hexokinase domains are found at residues 16–458 (DDQV…MVTA) and 464–906 (AEQH…LITA). ATP is bound by residues Arg30 and 84–89 (DLGGSS). The segment at 73–207 (DGSEKGDFIA…DYDANIVAVV (135 aa)) is hexokinase small subdomain 1. 84-88 (DLGGS) is a binding site for D-glucose 6-phosphate. D-glucose is bound by residues Ser155, 172 to 173 (TK), and 208 to 209 (ND). The interval 208–447 (NDTVGTMMTC…SDVRFLLSES (240 aa)) is hexokinase large subdomain 1. Residues Asp209 and Thr232 each contribute to the D-glucose 6-phosphate site. D-glucose-binding positions include Asn235, Glu260, and 291–294 (QLFE). Position 337 is a phosphoserine (Ser337). 413 to 415 (DGS) contributes to the D-glucose 6-phosphate binding site. Residue 425 to 426 (RR) participates in ATP binding. D-glucose 6-phosphate-binding positions include Thr449, 532 to 536 (DLGGT), and Ser603. The interval 521-655 (DGTEHGDFLA…EFDLDVVAVV (135 aa)) is hexokinase small subdomain 2. 532-537 (DLGGTN) contributes to the ATP binding site. Residues 620–621 (TK) and 656–657 (ND) each bind D-glucose. The segment at 656 to 895 (NDTVGTMMTC…CTVSFLLSED (240 aa)) is hexokinase large subdomain 2. Asp657 and Thr680 together coordinate D-glucose 6-phosphate. Residue Thr680 coordinates ATP. Positions 683, 708, and 742 each coordinate D-glucose. ATP contacts are provided by residues 747 to 748 (GM), 784 to 788 (TKFLS), and 863 to 867 (TLYKL). Residues 861-863 (DGT) and Ser897 contribute to the D-glucose 6-phosphate site.

This sequence belongs to the hexokinase family. As to quaternary structure, monomer. Interacts with RABL2/RABL2A; binds preferentially to GTP-bound RABL2. Interacts with VDAC1. The HK1-VDAC1 complex interacts with ATF2. Interacts (via N-terminal spermatogenic cell-specific region) with PFKM (via C-terminus). Interacts with SMAD5. As to expression, expressed in flagella of epididymal sperm.

It localises to the mitochondrion outer membrane. The protein resides in the cytoplasm. Its subcellular location is the cytosol. The catalysed reaction is a D-hexose + ATP = a D-hexose 6-phosphate + ADP + H(+). It carries out the reaction D-fructose + ATP = D-fructose 6-phosphate + ADP + H(+). It catalyses the reaction D-glucose + ATP = D-glucose 6-phosphate + ADP + H(+). The enzyme catalyses D-mannose + ATP = D-mannose 6-phosphate + ADP + H(+). The catalysed reaction is D-glucosamine + ATP = D-glucosamine 6-phosphate + ADP + H(+). Its pathway is carbohydrate metabolism; hexose metabolism. It participates in carbohydrate degradation; glycolysis; D-glyceraldehyde 3-phosphate and glycerone phosphate from D-glucose: step 1/4. Hexokinase is an allosteric enzyme inhibited by its product D-glucose 6-phosphate. Hexokinase activity is inhibited by N-acetyl-D-glucosamine. Functionally, catalyzes the phosphorylation of various hexoses, such as D-glucose, D-glucosamine, D-fructose, D-mannose and 2-deoxy-D-glucose, to hexose 6-phosphate (D-glucose 6-phosphate, D-glucosamine 6-phosphate, D-fructose 6-phosphate, D-mannose 6-phosphate and 2-deoxy-D-glucose 6-phosphate, respectively). Mediates the initial step of glycolysis by catalyzing phosphorylation of D-glucose to D-glucose 6-phosphate. Involved in innate immunity and inflammation by acting as a pattern recognition receptor for bacterial peptidoglycan. When released in the cytosol, N-acetyl-D-glucosamine component of bacterial peptidoglycan inhibits the hexokinase activity of HK1 and causes its dissociation from mitochondrial outer membrane, thereby activating the NLRP3 inflammasome. This Rattus norvegicus (Rat) protein is Hexokinase-1.